A 91-amino-acid chain; its full sequence is Early E3B 10.4 kDa protein (91 aa).

Positions Met-1–Thr-22 are cleaved as a signal peptide. Residues Ala-23 to Pro-34 are Lumenal-facing. A helical membrane pass occupies residues Phe-35–Phe-60. At Gln-61–Ile-91 the chain is on the cytoplasmic side.

Belongs to the adenoviridae E3B family.

It is found in the host endoplasmic reticulum membrane. Functionally, down-regulates the EGF receptor. In Homo sapiens (Human), this protein is Early E3B 10.4 kDa protein.